Consider the following 485-residue polypeptide: WAS/WASL-interacting protein family member 3 (485 aa).

The segment covering 1 to 30 (MPVPPPPPPPLPPPPPPLGAPPPPPPPGPP) has biased composition (pro residues). The segment at 1–485 (MPVPPPPPPP…NSQLSLKALR (485 aa)) is disordered. Short sequence motifs (profilin-binding motif) lie at residues 3–8 (VPPPPP), 11–16 (LPPPPP), and 20–25 (APPPPP). The 18-residue stretch at 45–62 (GRSALLADIQQGTRLRKV) folds into the WH2 domain. Arg-46 bears the Asymmetric dimethylarginine mark. An RLRK motif is present at residues 58–61 (RLRK). Over residues 63–78 (TQINDRSAPQIESSKG) the composition is skewed to polar residues. At Ser-150 the chain carries Phosphoserine. Pro residues-rich tracts occupy residues 165 to 200 (PVPP…PPAS) and 207 to 243 (VSPP…PLPP). Residue Ser-208 is modified to Phosphoserine. The span at 244 to 259 (ASALSEKAVRPQLAPL) shows a compositional bias: low complexity. 2 stretches are compositionally biased toward pro residues: residues 260–275 (HLPP…PPYG) and 293–312 (PPAP…PPLP). Ser-394 carries the post-translational modification Phosphoserine. A compositionally biased stretch (polar residues) spans 396 to 407 (TTELSSKTQQPG). Residues 417 to 441 (VIDDFESKFTFHSMEDFPPPDEYKP) are compositionally biased toward basic and acidic residues. Positions 426–450 (TFHSMEDFPPPDEYKPGQKIYPSKV) match the WASP-binding motif motif. Over residues 475–485 (RNSQLSLKALR) the composition is skewed to polar residues.

It belongs to the verprolin family. As to quaternary structure, isoform 1 interacts with WASL (via WH1 domain), and monomeric and filamentous actin. In terms of tissue distribution, detected mainly in brain and at lower levels in heart and lung (at protein level). Also detected in testis but not in kidney, liver or spleen.

It localises to the cytoplasm. In terms of biological role, may have a role in spermatogenesis. May be a regulator of cytoskeletal organization. This is WAS/WASL-interacting protein family member 3 (Wipf3) from Rattus norvegicus (Rat).